Reading from the N-terminus, the 772-residue chain is Uracil catabolism protein 2 (772 aa).

Positions 1-70 are disordered; sequence MDINSNASVS…KKPRKKRKTF (70 aa). Residues 39 to 51 are compositionally biased toward basic and acidic residues; sequence HPEDSARAKERSE. Positions 59–69 are enriched in basic residues; sequence GNKKPRKKRKT. The segment at residues 72-101 is a DNA-binding region (zn(2)-C6 fungal-type); that stretch reads CDTCRRVKTRCDFEPFIGKCYRCNVLQLDC.

The protein belongs to the URC2 family.

Its subcellular location is the cytoplasm. It is found in the nucleus. Probable transcriptional activator involved in uracil catabolism. The chain is Uracil catabolism protein 2 (URC2) from Saccharomyces cerevisiae (strain ATCC 204508 / S288c) (Baker's yeast).